The primary structure comprises 323 residues: Probable cell division protein WhiA (323 aa).

The segment at residues 279 to 313 (TLKELGEMVSGGKISKSGINHRLRKLDEIAERLRA) is a DNA-binding region (H-T-H motif).

It belongs to the WhiA family.

Involved in cell division and chromosome segregation. The protein is Probable cell division protein WhiA of Anoxybacillus flavithermus (strain DSM 21510 / WK1).